The sequence spans 1003 residues: Glycine--tRNA ligase (1003 aa).

The interval 1–310 is glycine--tRNA ligase alpha subunit; sequence MSSQPLTLQD…VTAKQIPHIC (310 aa). Residues 311–1003 are glycine--tRNA ligase beta subunit; sequence QDEDFLLEIG…CFGFYAWDAL (693 aa).

Belongs to the class-II aminoacyl-tRNA synthetase family.

It is found in the cytoplasm. The catalysed reaction is tRNA(Gly) + glycine + ATP = glycyl-tRNA(Gly) + AMP + diphosphate. The sequence is that of Glycine--tRNA ligase (glyQS) from Chlamydia muridarum (strain MoPn / Nigg).